The chain runs to 207 residues: Putative 3-methyladenine DNA glycosylase (207 aa).

It belongs to the DNA glycosylase MPG family.

This chain is Putative 3-methyladenine DNA glycosylase, found in Burkholderia cenocepacia (strain HI2424).